A 281-amino-acid chain; its full sequence is NAD kinase (281 aa).

Residue Asp-61 is the Proton acceptor of the active site. Residues 61–62 (DG), 134–135 (ND), Arg-145, Asp-164, 175–180 (TAYSLS), and Gln-234 each bind NAD(+).

The protein belongs to the NAD kinase family. The cofactor is a divalent metal cation.

The protein resides in the cytoplasm. It carries out the reaction NAD(+) + ATP = ADP + NADP(+) + H(+). In terms of biological role, involved in the regulation of the intracellular balance of NAD and NADP, and is a key enzyme in the biosynthesis of NADP. Catalyzes specifically the phosphorylation on 2'-hydroxyl of the adenosine moiety of NAD to yield NADP. The polypeptide is NAD kinase (Clostridium botulinum (strain Loch Maree / Type A3)).